The primary structure comprises 401 residues: 1-deoxy-D-xylulose 5-phosphate reductoisomerase (401 aa).

T10, G11, S12, I13, G36, R37, N38, and N124 together coordinate NADPH. K125 provides a ligand contact to 1-deoxy-D-xylulose 5-phosphate. E126 is an NADPH binding site. D150 contacts Mn(2+). S151, E152, S176, and H199 together coordinate 1-deoxy-D-xylulose 5-phosphate. E152 is a Mn(2+) binding site. G205 contacts NADPH. 4 residues coordinate 1-deoxy-D-xylulose 5-phosphate: S212, N217, K218, and E221. E221 serves as a coordination point for Mn(2+).

This sequence belongs to the DXR family. Requires Mg(2+) as cofactor. Mn(2+) serves as cofactor.

It catalyses the reaction 2-C-methyl-D-erythritol 4-phosphate + NADP(+) = 1-deoxy-D-xylulose 5-phosphate + NADPH + H(+). It functions in the pathway isoprenoid biosynthesis; isopentenyl diphosphate biosynthesis via DXP pathway; isopentenyl diphosphate from 1-deoxy-D-xylulose 5-phosphate: step 1/6. In terms of biological role, catalyzes the NADPH-dependent rearrangement and reduction of 1-deoxy-D-xylulose-5-phosphate (DXP) to 2-C-methyl-D-erythritol 4-phosphate (MEP). The protein is 1-deoxy-D-xylulose 5-phosphate reductoisomerase of Acaryochloris marina (strain MBIC 11017).